The sequence spans 1976 residues: Protein TIC 214 (1976 aa).

A run of 6 helical transmembrane segments spans residues 11 to 31 (LLLLWINIVNSVVMVGLYYGF), 64 to 84 (FIMGQFIVFISTYYPPLHLAL), 87 to 107 (PHTLTVLVIPYLLSHFWFFWN), 126 to 146 (LSIQYVFLNNLIFQLFNHFVL), 173 to 193 (FFGWLIGHMLLMKCIGLVLSW), and 221 to 241 (IFSILLFIICICYLGRMPSPI). Residues 619–635 (FEEEEEEEEEDDQEEST) show a composition bias toward acidic residues. Disordered regions lie at residues 619-642 (FEEEEEEEEEDDQEESTDDHGIRS) and 830-861 (SSYVGEGAKEKEKIEEEHEEEKGEYKRKEDKR). A compositionally biased stretch (basic and acidic residues) spans 836-861 (GAKEKEKIEEEHEEEKGEYKRKEDKR). 2 helical membrane passes run 1054–1074 (IIKIVLFIKIKVKEVFFFFVL) and 1202–1222 (IYMSILLCITNIYRIYVQFFL). Residues 1633 to 1665 (QKERFHPKPKVESNQKGYLELENRNRDEKERQH) are compositionally biased toward basic and acidic residues. The segment at 1633–1669 (QKERFHPKPKVESNQKGYLELENRNRDEKERQHQGNL) is disordered.

The protein belongs to the TIC214 family. In terms of assembly, part of the Tic complex.

The protein localises to the plastid. It localises to the chloroplast inner membrane. Involved in protein precursor import into chloroplasts. May be part of an intermediate translocation complex acting as a protein-conducting channel at the inner envelope. This is Protein TIC 214 from Nymphaea alba (White water-lily).